The sequence spans 147 residues: Large ribosomal subunit protein uL13 (147 aa).

This sequence belongs to the universal ribosomal protein uL13 family. Part of the 50S ribosomal subunit.

In terms of biological role, this protein is one of the early assembly proteins of the 50S ribosomal subunit, although it is not seen to bind rRNA by itself. It is important during the early stages of 50S assembly. This Mycolicibacterium paratuberculosis (strain ATCC BAA-968 / K-10) (Mycobacterium paratuberculosis) protein is Large ribosomal subunit protein uL13.